An 871-amino-acid polypeptide reads, in one-letter code: Bifunctional cordycepin biosynthesis cluster protein 3 (871 aa).

It participates in secondary metabolite biosynthesis. Nucleoside/nucleotide kinase; part of the gene cluster that mediates the biosynthesis of cordycepin (COR) and pentostatin (PTN), two adenosine analogs with related bioactivity profiles as both mimic adenosine and can inhibit some of the processes that are adenosine dependent. Within the pathway, cns3 catalyzes both the first step of cordycepin biosynthesis by phosphorylating adenosine into 3'-AMP via its kinase activity and the conversion of adenosine into pentostatin via its ATP phosphoribosyltransferase activity. The first step of cordycepin biosynthesis involves hydroxyl phosphorylation of the 3'-OH position on adenosine to produce adenosine-3'-monophosphate (3'-AMP), catalyzed by kinase activity of cns3. Next, 3'-AMP is dephosphorylated to 2'-carbonyl-3'-deoxyadenosine (2'-C-3'-dA) by cns2, which is finally converted to cordycepin (3'-deoxyadenosine) by the oxidoreductase cns1. In Cordyceps militaris (strain CM01) (Caterpillar fungus), this protein is Bifunctional cordycepin biosynthesis cluster protein 3.